The primary structure comprises 629 residues: DNA-directed RNA polymerase III subunit rpc3 (629 aa).

Disordered stretches follow at residues 136 to 164 (ANGV…SNEQ), 247 to 294 (PRGA…EMGY), and 373 to 420 (QLDL…SGGN). The span at 257 to 268 (RRADEPNKKCRT) shows a compositional bias: basic and acidic residues. The span at 272–293 (SVDENDEHDEEEENEWSDDEMG) shows a compositional bias: acidic residues. Polar residues predominate over residues 374 to 388 (LDLSSSTGPMDSSQP). A compositionally biased stretch (basic and acidic residues) spans 389–409 (DGRRGKRPWDGDVEGTNHEEA). Residues 556-577 (TYKAMSRCLQRLRFERSRIKDF) form a leucine-zipper region.

It belongs to the RNA polymerase beta chain family. As to quaternary structure, component of the RNA polymerase III (Pol III) complex consisting of 17 subunits.

The protein resides in the nucleus. Its function is as follows. DNA-dependent RNA polymerase catalyzes the transcription of DNA into RNA using the four ribonucleoside triphosphates as substrates. Specific core component of RNA polymerase III which synthesizes small RNAs, such as 5S rRNA and tRNAs. This is DNA-directed RNA polymerase III subunit rpc3 (rpc82) from Aspergillus fumigatus (strain ATCC MYA-4609 / CBS 101355 / FGSC A1100 / Af293) (Neosartorya fumigata).